A 444-amino-acid chain; its full sequence is NADH-dependent flavin oxidoreductase nadA (444 aa).

FMN contacts are provided by residues 37–40 (ERMC) and Q123. The tract at residues 127–149 (PGRQTPSHRQPEPISASDVPLDT) is disordered. 192–195 (HAAH) contributes to the substrate binding site. Residue 345–346 (AR) participates in FMN binding.

The protein belongs to the NADH:flavin oxidoreductase/NADH oxidase family.

The protein resides in the cytoplasm. It localises to the cytosol. Its function is as follows. NADH-dependent flavin oxidoreductase; part of the gene cluster that mediates the biosynthesis of aflatoxins, a group of polyketide-derived furanocoumarins, and part of the most toxic and carcinogenic compounds among the known mycotoxins. The four major aflatoxins produced by A.parasiticus are aflatoxin B1 (AFB1), aflatoxin B2 (AFB2), aflatoxin G1 (AFG1) and aflatoxin G2 (AFG2). Within the aflatoxin pathway, the NADH-dependent flavin oxidoreductase nadA is specifically required for the last steps in which OMST is converted specifically to aflatoxin G1. The biosynthesis of aflatoxins begins with the norsolorinic acid synthase aflC that combines a hexanoyl starter unit produced by the fatty acid synthase aflA/aflB and 7 malonyl-CoA extender units to synthesize the precursor NOR. The second step is the conversion of NOR to averantin and requires the norsolorinic acid ketoreductase aflD, which catalyzes the dehydration of norsolorinic acid to form (1'S)-averantin. The norsolorinic acid reductases aflE and aflF may also play a role in the conversion of NOR to AVN. The cytochrome P450 monooxygenase aflG then catalyzes the hydroxylation of AVN to 5'hydroxyaverantin (HAVN). The next step is performed by the 5'-hydroxyaverantin dehydrogenase aflH that transforms HAVN to 5'-oxoaverantin (OAVN) which is further converted to averufin (AVF) by aflK that plays a dual role in the pathway, as a 5'-oxoaverantin cyclase that mediates conversion of 5'-oxoaverantin, as well as a versicolorin B synthase in a later step in the pathway. The averufin oxidase aflI catalyzes the conversion of AVF to versiconal hemiacetal acetate (VHA). VHA is then the substrate for the versiconal hemiacetal acetate esterase aflJ to yield versiconal (VAL). Versicolorin B synthase aflK then converts VAL to versicolorin B (VERB) by closing the bisfuran ring of aflatoxin which is required for DNA-binding, thus giving to aflatoxin its activity as a mutagen. Then, the activity of the versicolorin B desaturase aflL leads to versicolorin A (VERA). A branch point starts from VERB since it can also be converted to dihydrodemethylsterigmatocystin (DMDHST), probably also by aflL, VERA being a precursor for aflatoxins B1 and G1, and DMDHST for aflatoxins B2 and G2. Next, the versicolorin reductase aflM and the cytochrome P450 monooxygenase aflN are involved in conversion of VERA to demethylsterigmatocystin (DMST). AflX and aflY seem also involved in this step, through probable aflX-mediated epoxide ring-opening step following versicolorin A oxidation and aflY-mediated Baeyer-Villiger oxidation required for the formation of the xanthone ring. The methyltransferase aflO then leads to the modification of DMST to sterigmatocystin (ST), and of DMDHST to dihydrosterigmatocystin (DHST). Both ST and DHST are then substrates of the O-methyltransferase aflP to yield O-methylsterigmatocystin (OMST) and dihydro-O-methylsterigmatocystin (DHOMST), respectively. Finally OMST is converted to aflatoxins B1 and G1, and DHOMST to aflatoxins B2 and G2, via the action of several enzymes including O-methylsterigmatocystin oxidoreductase aflQ, the cytochrome P450 monooxygenase aflU, but also the NADH-dependent flavin oxidoreductase nadA which is specifically required for the synthesis of AFG1. This is NADH-dependent flavin oxidoreductase nadA from Aspergillus parasiticus (strain ATCC 56775 / NRRL 5862 / SRRC 143 / SU-1).